The primary structure comprises 173 residues: Signal peptidase complex catalytic subunit SEC11 (173 aa).

Over 1–15 (MLGVSGMQPRQLAAQ) the chain is Cytoplasmic. Residues 16–36 (ILNFALVLSTAFMMWKGLSVV) form a helical; Signal-anchor for type II membrane protein membrane-spanning segment. Residues 37–173 (SDSSSPIVVV…MGVMVVLQRE (137 aa)) are Lumenal-facing. Active-site charge relay system residues include Ser50, His89, and Asp115. The segment at 159–170 (VMLGLMGVMVVL) is C-terminal short (CTS) helix.

Belongs to the peptidase S26B family. Component of the signal peptidase complex (SPC) composed of a catalytic subunit SEC11 and three accessory subunits SPC1, SPC2 and SPC3. The complex induces a local thinning of the ER membrane which is used to measure the length of the signal peptide (SP) h-region of protein substrates. This ensures the selectivity of the complex towards h-regions shorter than 18-20 amino acids. SPC associates with the translocon complex.

The protein resides in the endoplasmic reticulum membrane. It carries out the reaction Cleavage of hydrophobic, N-terminal signal or leader sequences from secreted and periplasmic proteins.. Catalytic component of the signal peptidase complex (SPC) which catalyzes the cleavage of N-terminal signal sequences from nascent proteins as they are translocated into the lumen of the endoplasmic reticulum. Specifically cleaves N-terminal signal peptides that contain a hydrophobic alpha-helix (h-region) shorter than 18-20 amino acids. In Leptosphaeria maculans (strain JN3 / isolate v23.1.3 / race Av1-4-5-6-7-8) (Blackleg fungus), this protein is Signal peptidase complex catalytic subunit SEC11 (SEC11).